The sequence spans 178 residues: CASP-like protein 2U3 (178 aa).

Topologically, residues 1-4 (MACR) are cytoplasmic. The chain crosses the membrane as a helical span at residues 5 to 25 (VMEVLLRVLAILLSIAGALVM). Topologically, residues 26–52 (AKDKQDTFVMLGTVPVPLYARHSYVEA) are extracellular. Residues 53 to 73 (FVFLVYANGIVAIYCFIAVLL) form a helical membrane-spanning segment. Residues 74–80 (SLLAKSR) lie on the Cytoplasmic side of the membrane. Residues 81–101 (VLAGLLFFMDQALAYLLLAAA) form a helical membrane-spanning segment. Residues 102-132 (AASTEVAYIAKRGEKKLVWGEVCSNFEHFCN) are Extracellular-facing. The chain crosses the membrane as a helical span at residues 133–153 (LVGVSLVLTFLSVLVLVTLAI). Residues 154-178 (LSGKRLFGHPPLCAPPSTPPVHQGV) lie on the Cytoplasmic side of the membrane.

This sequence belongs to the Casparian strip membrane proteins (CASP) family. Homodimer and heterodimers.

It localises to the cell membrane. This is CASP-like protein 2U3 from Pteridium aquilinum subsp. aquilinum (Bracken fern).